We begin with the raw amino-acid sequence, 631 residues long: Leucine aminopeptidase 2-2 (631 aa).

Residues 140-142 (QCQ) and 265-270 (PYGGME) contribute to the substrate site. Histidine 294 provides a ligand contact to Zn(2+). Glutamate 295 functions as the Proton acceptor in the catalytic mechanism. Zn(2+)-binding residues include histidine 298 and glutamate 317. The Proton donor role is filled by tyrosine 395.

This sequence belongs to the peptidase M1 family. Requires Zn(2+) as cofactor.

The protein localises to the cytoplasm. It localises to the nucleus. It carries out the reaction an epoxide + H2O = an ethanediol. In terms of biological role, aminopeptidase that preferentially cleaves di- and tripeptides. Also has low epoxide hydrolase activity (in vitro). Can hydrolyze the epoxide leukotriene LTA(4) but it forms preferentially 5,6-dihydroxy-7,9,11,14-eicosatetraenoic acid rather than the cytokine leukotriene B(4) as the product compared to the homologous mammalian enzyme (in vitro). This Meyerozyma guilliermondii (strain ATCC 6260 / CBS 566 / DSM 6381 / JCM 1539 / NBRC 10279 / NRRL Y-324) (Yeast) protein is Leucine aminopeptidase 2-2.